A 76-amino-acid polypeptide reads, in one-letter code: Adropin (76 aa).

The N-terminal stretch at M1–A33 is a signal peptide. A disordered region spans residues I41 to P76. The span at S52–K65 shows a compositional bias: pro residues.

It is found in the secreted. Involved in the regulation of glucose homeostasis and lipid metabolism. The polypeptide is Adropin (ENHO) (Bos taurus (Bovine)).